We begin with the raw amino-acid sequence, 77 residues long: Large ribosomal subunit protein bL28 (77 aa).

The protein belongs to the bacterial ribosomal protein bL28 family.

The chain is Large ribosomal subunit protein bL28 from Acidovorax ebreus (strain TPSY) (Diaphorobacter sp. (strain TPSY)).